A 464-amino-acid polypeptide reads, in one-letter code: tRNA-2-methylthio-N(6)-dimethylallyladenosine synthase (464 aa).

The segment at 1–24 is disordered; sequence MSDLVPLSRKPAPAAGGPAPSPAA. The span at 8 to 18 shows a compositional bias: low complexity; the sequence is SRKPAPAAGGP. An MTTase N-terminal domain is found at 27-142; sequence RKVYVHTFGC…LPEMVERARD (116 aa). [4Fe-4S] cluster is bound by residues C36, C72, C105, C180, C184, and C187. The Radical SAM core domain occupies 166–398; sequence ARGRVTAFVT…LAAQRRIAGE (233 aa). The 64-residue stretch at 401 to 464 folds into the TRAM domain; that stretch reads AGELGKVVEV…GGSSLSGTLA (64 aa).

Belongs to the methylthiotransferase family. MiaB subfamily. As to quaternary structure, monomer. [4Fe-4S] cluster is required as a cofactor.

The protein resides in the cytoplasm. The enzyme catalyses N(6)-dimethylallyladenosine(37) in tRNA + (sulfur carrier)-SH + AH2 + 2 S-adenosyl-L-methionine = 2-methylsulfanyl-N(6)-dimethylallyladenosine(37) in tRNA + (sulfur carrier)-H + 5'-deoxyadenosine + L-methionine + A + S-adenosyl-L-homocysteine + 2 H(+). In terms of biological role, catalyzes the methylthiolation of N6-(dimethylallyl)adenosine (i(6)A), leading to the formation of 2-methylthio-N6-(dimethylallyl)adenosine (ms(2)i(6)A) at position 37 in tRNAs that read codons beginning with uridine. The polypeptide is tRNA-2-methylthio-N(6)-dimethylallyladenosine synthase (Anaeromyxobacter sp. (strain K)).